A 250-amino-acid polypeptide reads, in one-letter code: Cobalt transport protein CbiM (250 aa).

Positions 1 to 25 (MKQNIKLGVIAALMLIVLTPVTSNA) are cleaved as a signal peptide. 6 helical membrane passes run 33–53 (LPVKWSIAWGVIFIPFFLVGL), 68–88 (VLLALCGAFVFVLSALKIPSV), 100–120 (LGAIMFGPSVMFVLGTIVLIF), 132–152 (TLGANAFSMAIIGPIISFLIF), 163–183 (AMPVFLAAAIGDLATYTVTSI), and 205–225 (GIFFMTQIPIAIAEGILTVIV).

Belongs to the CbiM family. Forms an energy-coupling factor (ECF) transporter complex composed of an ATP-binding protein (A component, CbiO), a transmembrane protein (T component, CbiQ) and 2 possible substrate-capture proteins (S components, CbiM and CbiN) of unknown stoichimetry.

Its subcellular location is the cell membrane. The protein operates within cofactor biosynthesis; adenosylcobalamin biosynthesis. In terms of biological role, part of the energy-coupling factor (ECF) transporter complex CbiMNOQ involved in cobalt import. The chain is Cobalt transport protein CbiM from Clostridioides difficile (strain R20291) (Peptoclostridium difficile).